Reading from the N-terminus, the 349-residue chain is MSFSVAVAGASGYAGGELLRLLADHPRLEVQTLTAFQNAGERLREVHPHLTSYADRTFVETTAEQLAGHDVVFLALPHGKSGAITAELDDQTLVVDCGADHRLVDEAAWDAFYGGDFAGAWPYGLPELLHAEEGGTQRTRLSGVKRIAVPGCNVTAITLGLQPGIRAGVIEPEDVVAVLAVGPSGAGRSLRTNLLASEILGSASAYAVGGTHRHTPEIRQNLETAGGGHVSVSFTPVLVPMARGILATATARLAPGFSAHDVRAAWELAYADEPFVHLLPEGTFPNVSDVTGSNTALVGLAIDEAAGRVVTVTAIDNLVKGTAGAAIQSANIALGLPEAMGLPVNGVAP.

Residue C152 is part of the active site.

This sequence belongs to the NAGSA dehydrogenase family. Type 1 subfamily.

It localises to the cytoplasm. The catalysed reaction is N-acetyl-L-glutamate 5-semialdehyde + phosphate + NADP(+) = N-acetyl-L-glutamyl 5-phosphate + NADPH + H(+). It functions in the pathway amino-acid biosynthesis; L-arginine biosynthesis; N(2)-acetyl-L-ornithine from L-glutamate: step 3/4. Catalyzes the NADPH-dependent reduction of N-acetyl-5-glutamyl phosphate to yield N-acetyl-L-glutamate 5-semialdehyde. This is N-acetyl-gamma-glutamyl-phosphate reductase from Clavibacter sepedonicus (Clavibacter michiganensis subsp. sepedonicus).